Reading from the N-terminus, the 282-residue chain is Armadillo repeat-containing protein 1 (282 aa).

Position 1 is an N-acetylmethionine (Met1). The stretch at 39–81 (GCLPGLILFMDHPNPPVVHSALLALRYLAECRANREKMKGELG) is one ARM repeat. Thr137 is modified (phosphothreonine). Phosphoserine occurs at positions 189, 246, 260, and 267. The disordered stretch occupies residues 239–261 (DYLPEDESPTKEQDKAVSRVGSH). Over residues 246-255 (SPTKEQDKAV) the composition is skewed to basic and acidic residues.

As to quaternary structure, interacts with mitochondrial contact site and cristae organizing system (MICOS) complex components IMMT/MIC60 and MICOS10/MIC10. Interacts with mitochondrial outer membrane sorting assembly machinery (SAM) complex components SAMM50 and MTX1.

The protein resides in the cytoplasm. It localises to the mitochondrion. The protein localises to the mitochondrion outer membrane. In terms of biological role, in association with mitochondrial contact site and cristae organizing system (MICOS) complex components and mitochondrial outer membrane sorting assembly machinery (SAM) complex components may regulate mitochondrial dynamics playing a role in determining mitochondrial length, distribution and motility. This is Armadillo repeat-containing protein 1 (Armc1) from Mus musculus (Mouse).